Consider the following 692-residue polypeptide: Elongation factor G (692 aa).

The tr-type G domain occupies 8 to 282 (EKTRNIGIMA…AVLDYLPAPT (275 aa)). GTP is bound by residues 17 to 24 (AHIDAGKT), 81 to 85 (DTPGH), and 135 to 138 (NKMD).

Belongs to the TRAFAC class translation factor GTPase superfamily. Classic translation factor GTPase family. EF-G/EF-2 subfamily.

The protein localises to the cytoplasm. Catalyzes the GTP-dependent ribosomal translocation step during translation elongation. During this step, the ribosome changes from the pre-translocational (PRE) to the post-translocational (POST) state as the newly formed A-site-bound peptidyl-tRNA and P-site-bound deacylated tRNA move to the P and E sites, respectively. Catalyzes the coordinated movement of the two tRNA molecules, the mRNA and conformational changes in the ribosome. This chain is Elongation factor G, found in Bacillus velezensis (strain DSM 23117 / BGSC 10A6 / LMG 26770 / FZB42) (Bacillus amyloliquefaciens subsp. plantarum).